The primary structure comprises 723 residues: Polyribonucleotide nucleotidyltransferase (723 aa).

Positions 488 and 494 each coordinate Mg(2+). In terms of domain architecture, KH spans 555–614; sequence PRMITMKIHPDKIREVIGKGGSTIQALTKETGTTIDIQEDGTITIASTSTDGMAEAKRRI. One can recognise an S1 motif domain in the interval 624-692; it reads GKIYAGTVLK…EKGRLRLSLK (69 aa). Residues 701–723 are disordered; the sequence is SISPINAGEAAAPAAPAEGSEQQ. Positions 707 to 723 are enriched in low complexity; that stretch reads AGEAAAPAAPAEGSEQQ.

Belongs to the polyribonucleotide nucleotidyltransferase family. Requires Mg(2+) as cofactor.

It localises to the cytoplasm. It catalyses the reaction RNA(n+1) + phosphate = RNA(n) + a ribonucleoside 5'-diphosphate. Involved in mRNA degradation. Catalyzes the phosphorolysis of single-stranded polyribonucleotides processively in the 3'- to 5'-direction. The protein is Polyribonucleotide nucleotidyltransferase of Cupriavidus necator (strain ATCC 17699 / DSM 428 / KCTC 22496 / NCIMB 10442 / H16 / Stanier 337) (Ralstonia eutropha).